The sequence spans 113 residues: MLGTANLPSRNKYKAKATILHMNRNLYLVAYDICNPRRLRQVCRYLTGYKVSGQKSVFEIWVTPTELHTIRTELDKLMDTQADRLHILSLDPRMKPRCYGNASTFTVQHFCIV.

Asp-32 is a binding site for Mg(2+).

This sequence belongs to the CRISPR-associated endoribonuclease Cas2 protein family. In terms of assembly, homodimer, forms a heterotetramer with a Cas1 homodimer. It depends on Mg(2+) as a cofactor.

In terms of biological role, CRISPR (clustered regularly interspaced short palindromic repeat), is an adaptive immune system that provides protection against mobile genetic elements (viruses, transposable elements and conjugative plasmids). CRISPR clusters contain sequences complementary to antecedent mobile elements and target invading nucleic acids. CRISPR clusters are transcribed and processed into CRISPR RNA (crRNA). Functions as a ssRNA-specific endoribonuclease. Involved in the integration of spacer DNA into the CRISPR cassette. This Nitrosomonas europaea (strain ATCC 19718 / CIP 103999 / KCTC 2705 / NBRC 14298) protein is CRISPR-associated endoribonuclease Cas2 2 (cas22).